Consider the following 77-residue polypeptide: UPF0401 protein UTI89_C4989 (77 aa).

The protein belongs to the UPF0401 family.

The protein is UPF0401 protein UTI89_C4989 of Escherichia coli (strain UTI89 / UPEC).